A 69-amino-acid chain; its full sequence is Cecropin-like peptide 1 (69 aa).

A signal peptide spans 1-23 (MNFTKLFVVFAVVLVAFAGQSEA). A Glutamine amide modification is found at Gln68.

Following bacterial infection, expressed in fat body, trachea and muscle.

Its subcellular location is the secreted. Antimicrobial peptide active against Gram-negative bacteria E.coli KCCM 11234 (MIC&lt;=1.03 uM), E.aerogenes KCCM 12177 (MIC&lt;=2.07 uM) and P.aeruginosa KCCM 11328 (MIC&lt;=2.07 uM). Not active against various Gram-positive bacteria at concentrations up to 4.14 uM. This chain is Cecropin-like peptide 1, found in Hermetia illucens (Black soldier fly).